The chain runs to 1154 residues: uncharacterized protein (1154 aa).

Positions 1–18 are cleaved as a signal peptide; sequence MKRNIFIKLLISLLLLSS. Residue Cys-19 is the site of N-palmitoyl cysteine attachment. Cys-19 carries S-diacylglycerol cysteine lipidation. The next 4 helical transmembrane spans lie at 288–308, 394–414, 423–443, and 458–478; these read ISVS…FLIG, LGFI…FLIF, ALIT…FMLF, and ISYA…SMII.

This sequence belongs to the TrbL/VirB6 family.

The protein localises to the cell membrane. This is an uncharacterized protein from Rickettsia typhi (strain ATCC VR-144 / Wilmington).